Reading from the N-terminus, the 119-residue chain is Large ribosomal subunit protein uL14 (119 aa).

It belongs to the universal ribosomal protein uL14 family. As to quaternary structure, part of the 50S ribosomal subunit. Forms a cluster with proteins L3 and L19. In the 70S ribosome, L14 and L19 interact and together make contacts with the 16S rRNA in bridges B5 and B8.

Functionally, binds to 23S rRNA. Forms part of two intersubunit bridges in the 70S ribosome. This Wolbachia pipientis wMel protein is Large ribosomal subunit protein uL14.